We begin with the raw amino-acid sequence, 2883 residues long: Desmoplakin (2883 aa).

A disordered region spans residues 1–21 (MSCNGGSHPRINTLGRMTRAE). Residues 1 to 596 (MSCNGGSHPR…DYMKTIEDLE (596 aa)) form an interaction with PKP1, JUP, PKP2 region. The interval 1-1068 (MSCNGGSHPR…ANSENCNKNK (1068 aa)) is globular 1. A Phosphoserine modification is found at Ser22. The residue at position 59 (Thr59) is a Phosphothreonine. Ser65 carries the phosphoserine modification. Phosphotyrosine is present on Tyr68. Thr73 is modified (phosphothreonine). Phosphoserine is present on residues Ser177, Ser178, and Ser188. Spectrin repeat units follow at residues 190–283 (SGWD…HLRQ) and 284–387 (LQNI…LKEN). The stretch at 388–458 (AAYFQFFEEA…NLVNKSKKIV (71 aa)) is one Spectrin 3a repeat. The SH3 domain occupies 470–527 (NKPIILRALCDYKQDQKIVHKGDECILKDNNERSKWYVTGPGGVDMLVPSVGLIIPPP). One copy of the Spectrin 3b repeat lies at 528–557 (NPLAVDLSCKIEQYYEAILALWNQLYINMK). Spectrin repeat units follow at residues 558–639 (SLVS…IQLP), 666–781 (VIET…SLCS), and 782–895 (VRAL…DLEK). Residues 1034 to 1956 (KSLEDLKLKN…LQKEIEKLRQ (923 aa)) adopt a coiled-coil conformation. Residues 1069 to 1957 (FLDQNLQKYQ…QKEIEKLRQR (889 aa)) form a central fibrous rod domain region. Phosphoserine occurs at positions 1670, 1720, and 2036. Residues 1958 to 2882 (PYGSHRETQT…YSFSSSSIGG (925 aa)) form a globular 2 region. Residues 1972–2220 (TVDSSKLVFD…LLLSVQKRSM (249 aa)) form a 4.5 X 38 AA tandem repeats (Domain A) region. 17 Plectin repeats span residues 2021-2057 (QPFLRGAGAIAGASASPKEKYSLVEAKRKKFITPEST), 2058-2095 (VMLLEAQAATGGIIDPHRNEKLTVDNAVARDLIDFDDR), 2096-2133 (QQIYTAEKAITGFDDPFSGKTVSVSEAIKKNLIDRETG), 2134-2171 (MRLLEAQLASGGVVDPVNSVFLPKDVALARGLIDRDLY), 2175-2209 (NDPRDSQKNFVDPITKKKVSYMQLRERCRIEPHTG), 2210-2245 (LLLLSVQKRSMSFQGIRQPVTVTELVDSGILRPSTV), 2263-2300 (KDFLQGSSCIAGIYNETTKQKLGIYEAMKIGLVRPGTA), 2301-2338 (LELLEAQAATGFIVDPVSNLRLPVEEAYKRGLVGIEFK), 2339-2376 (EKLLSAERAVTGYNDPETGNIISLFQAMNKELIEKGHG), 2377-2414 (IRLLEAQIATGGIIDPKESHRLPVDMAYKRGYFNEELS), 2418-2452 (SDPSDDTKGFFDPNTEENLTYLQLKERCIKDEETG), 2468-2505 (SQKNTLRKRRVVIVDPETNKEMSVQEAYKKGLIDYDTF), 2519-2556 (TITGSDGSTRVVLVDRKTGSQYDIQDAIDKGLVDRKFF), 2622-2659 (SDPLEESSPIAAIFDTENLEKISIAEGIERGIVDSITG), 2660-2697 (QRLLEAQACTGGIIHPTTGQKLSLQDAVNQGLIDQDMA), 2736-2773 (QRFLEFQFLTGGLVDPEVHGRISTEEAIRKGFIDGRAA), and 2774-2811 (QRLQDISSYAKILTCPKTKLKISYKDAMNRSMVEDITG). Phosphoserine is present on residues Ser2219, Ser2221, and Ser2237. The 4.5 X 38 AA tandem repeats (Domain B) stretch occupies residues 2256-2458 (DEVGERIKDF…EETGLCLLPL (203 aa)). Gln2492 carries the Omega-hydroxyceramide glutamate ester lipid modification. The interval 2621–2833 (LSDPLEESSP…GLPSPYNMSA (213 aa)) is 4.5 X 38 AA tandem repeats (Domain C). 2 positions are modified to phosphoserine: Ser2822 and Ser2827. Residues 2822 to 2883 (SKGLPSPYNM…SFSSSSIGGY (62 aa)) form a disordered region. At Tyr2829 the chain carries Phosphotyrosine. Phosphoserine occurs at positions 2832 and 2836. The interval 2835 to 2858 (GSRSGSRSGSRSGSRSGSRSGSRR) is 6 X 4 AA tandem repeats of G-S-R-[SR]. The span at 2835–2858 (GSRSGSRSGSRSGSRSGSRSGSRR) shows a compositional bias: low complexity. An omega-N-methylarginine mark is found at Arg2837 and Arg2858. Ser2860 bears the Phosphoserine mark. Thr2864 is modified (phosphothreonine). Residues 2867–2883 (SSYSYSYSFSSSSIGGY) are compositionally biased toward low complexity. Ser2879 carries the phosphoserine modification.

This sequence belongs to the plakin or cytolinker family. Homodimer. Interacts with COL17A1 (via cytoplasmic region). Interacts with DSC2. Interacts with PKP1. Interacts with PKP2. Interacts weakly with TMEM65. Post-translationally, phosphorylation at Ser-2860 increases association with intermediate filament cytokeratin, potentially facilitating interaction between desmosome junctions and intermediate filament architecture. Expressed in undifferentiated keratinocytes of the epidermis at birth, expression increases as differentiation proceeds (at protein level). Abundantly expressed in the suprabasal layers and weakly in the basal layers of the outer hair root sheath (at protein level). Expressed at intercalated disks in cardiomyocytes (at protein level).

The protein resides in the cell junction. It is found in the desmosome. The protein localises to the cell membrane. It localises to the cytoplasm. In terms of biological role, major high molecular weight protein of desmosomes. Regulates profibrotic gene expression in cardiomyocytes via activation of the MAPK14/p38 MAPK signaling cascade and increase in TGFB1 protein abundance. This Mus musculus (Mouse) protein is Desmoplakin.